A 575-amino-acid polypeptide reads, in one-letter code: Sodium/calcium exchanger NCL2 (575 aa).

3 helical membrane-spanning segments follow: residues 69-89 (FLPCTTTAWGNLFLVLAYGFL), 112-132 (IVGGLFLPILGALPDALLILV), and 146-166 (VLIGMGLLAGSTVMLLTLLWG). N-linked (GlcNAc...) asparagine glycosylation occurs at Asn179. The next 2 helical transmembrane spans lie at 210–230 (IMAISILPFIIVQIPKIFKLH) and 237–257 (VLIGLIVAALLLLSYCLYQVF). EF-hand domains lie at 297-332 (PNVSVIEKLFHRIDQDNDGKLERGELQAFIVGINFE) and 337-372 (NSNLAADQVMADFDTSRNHFIEKGEFVNGMLRWLDE). Asn298 is a glycosylation site (N-linked (GlcNAc...) asparagine). Ca(2+) is bound by residues Asp310, Asp312, Asp314, Lys316, Glu321, Asp350, Ser352, Asn354, and Glu361. 5 helical membrane passes run 417-437 (WTCIKAILLLLLGTAMAAASA), 457-477 (FISFIVMPLATNSSEAVSAII), 494-514 (VYGGVTMNNTLCLAVFLALVY), 522-542 (FSSEVLIILLVCIIMGLFTSF), and 548-568 (LWTCFVAFLLYPLSLIMVYIL).

This sequence belongs to the Ca(2+):cation antiporter (CaCA) (TC 2.A.19) family.

The protein localises to the cell membrane. In terms of biological role, may function as a sodium/calcium exchanger (NCX) and participate in the maintenance of calcium homeostasis. May play a role abiotic stress responses. The chain is Sodium/calcium exchanger NCL2 from Oryza sativa subsp. japonica (Rice).